The chain runs to 439 residues: Glutamate--tRNA ligase 2 (439 aa).

The 'HIGH' region motif lies at 6 to 16 (PSPTGDMHIGN). Residues 232–236 (KMSKR) carry the 'KMSKS' region motif. Lysine 235 is a binding site for ATP.

This sequence belongs to the class-I aminoacyl-tRNA synthetase family. Glutamate--tRNA ligase type 1 subfamily. Monomer.

It localises to the cytoplasm. The catalysed reaction is tRNA(Glu) + L-glutamate + ATP = L-glutamyl-tRNA(Glu) + AMP + diphosphate. Its function is as follows. Catalyzes the attachment of glutamate to tRNA(Glu) in a two-step reaction: glutamate is first activated by ATP to form Glu-AMP and then transferred to the acceptor end of tRNA(Glu). This chain is Glutamate--tRNA ligase 2, found in Helicobacter pylori (strain HPAG1).